A 164-amino-acid chain; its full sequence is UPF0304 protein ECA3037 (164 aa).

This sequence belongs to the UPF0304 family.

This is UPF0304 protein ECA3037 from Pectobacterium atrosepticum (strain SCRI 1043 / ATCC BAA-672) (Erwinia carotovora subsp. atroseptica).